The sequence spans 584 residues: 2-succinyl-5-enolpyruvyl-6-hydroxy-3-cyclohexene-1-carboxylate synthase (584 aa).

It belongs to the TPP enzyme family. MenD subfamily. In terms of assembly, homodimer. Requires Mg(2+) as cofactor. The cofactor is Mn(2+). Thiamine diphosphate serves as cofactor.

It carries out the reaction isochorismate + 2-oxoglutarate + H(+) = 5-enolpyruvoyl-6-hydroxy-2-succinyl-cyclohex-3-ene-1-carboxylate + CO2. The protein operates within quinol/quinone metabolism; 1,4-dihydroxy-2-naphthoate biosynthesis; 1,4-dihydroxy-2-naphthoate from chorismate: step 2/7. Its pathway is quinol/quinone metabolism; menaquinone biosynthesis. Its function is as follows. Catalyzes the thiamine diphosphate-dependent decarboxylation of 2-oxoglutarate and the subsequent addition of the resulting succinic semialdehyde-thiamine pyrophosphate anion to isochorismate to yield 2-succinyl-5-enolpyruvyl-6-hydroxy-3-cyclohexene-1-carboxylate (SEPHCHC). This is 2-succinyl-5-enolpyruvyl-6-hydroxy-3-cyclohexene-1-carboxylate synthase from Bacillus cereus (strain ZK / E33L).